The primary structure comprises 383 residues: Cathepsin D (383 aa).

Residues 1-18 (MKLLILTLFLATIVLAQA) form the signal peptide. Residues 19 to 48 (LTVPLNFHQASRESRRRVPQKWSNRLSALN) constitute a propeptide that is removed on maturation. Residues 63 to 378 (YYGAITIGTP…DFGNKQVGFA (316 aa)) form the Peptidase A1 domain. The active site involves aspartate 81. Cysteines 94 and 101 form a disulfide. 2 N-linked (GlcNAc...) asparagine glycosylation sites follow: asparagine 118 and asparagine 238. Cysteines 259 and 263 form a disulfide. Aspartate 268 is a catalytic residue. Cysteine 302 and cysteine 339 are oxidised to a cystine. Residue asparagine 310 is glycosylated (N-linked (GlcNAc...) asparagine).

Belongs to the peptidase A1 family. As to quaternary structure, monomer. In terms of processing, N-glycosylated on 2 out of the 3 potential sites. Glycans contain sulfated Mannose.

It localises to the lysosome. Its subcellular location is the secreted. The enzyme catalyses Specificity similar to, but narrower than, that of pepsin A. Does not cleave the 4-Gln-|-His-5 bond in B chain of insulin.. In terms of biological role, protease that may act during cell growth and/or development. The sequence is that of Cathepsin D (ctsD) from Dictyostelium discoideum (Social amoeba).